The chain runs to 566 residues: Osteoclast stimulatory transmembrane protein (566 aa).

Topologically, residues 1 to 51 (MPGHPGAAEQLVKTGWRSWHLGFWKALAPLQAAWDAFSQPVPASCGQLLTQ) are cytoplasmic. A helical membrane pass occupies residues 52–72 (LLLCASLAAAAAGLVYHWLAS). Residues 73-81 (LLLYPPGPS) lie on the Extracellular side of the membrane. A helical transmembrane segment spans residues 82-102 (AMVATVCGLLVFLSLGLVPPV). At 103 to 128 (RCLFALSVPTLGMEQGRRLLLSYSTA) the chain is on the cytoplasmic side. The chain crosses the membrane as a helical span at residues 129–149 (TLAIAVVPNVLANVGAAGQVL). Residues 150-227 (RCVTEGSLES…ARAAALGTQR (78 aa)) lie on the Extracellular side of the membrane. A helical transmembrane segment spans residues 228–248 (VVTGLFMLGLLVESAWYLHCY). Topologically, residues 249–304 (LTDLRFDNIYATQQLTQRLAQAQATHLLAPPPTWLLQAAQLRLSQEELLSCLLRLG) are cytoplasmic. A helical transmembrane segment spans residues 305 to 325 (LLALLLVATAVAVATDHVAFL). The Extracellular portion of the chain corresponds to 326 to 398 (LAQATVDWAQ…CPLLPARRPR (73 aa)). The chain crosses the membrane as a helical span at residues 399–419 (AAAPLAAGALQLLAGSTVLLE). At 420–566 (AYARRLRHAI…EGNTGHDRPG (147 aa)) the chain is on the cytoplasmic side.

The protein localises to the membrane. Its function is as follows. Probable cell surface receptor that plays a role in cellular fusion and cell differentiation. Cooperates with DCSTAMP in modulating cell-cell fusion in both osteoclasts and foreign body giant cells (FBGCs). Involved in osteoclast bone resorption. Promotes osteoclast differentiation and may play a role in the multinucleated osteoclast maturation. This is Osteoclast stimulatory transmembrane protein (OCSTAMP) from Homo sapiens (Human).